Here is a 103-residue protein sequence, read N- to C-terminus: Truncated secreted TNF-receptor-like protein A53R (103 aa).

Residues 36–73 form a TNFR-Cys 1 repeat; the sequence is SCDKGEYLDKRHNQCCNRCPPGEFAKVRCNGNDNTKCE. Disulfide bonds link Cys37/Cys50, Cys51/Cys64, and Cys54/Cys72. Residues 74 to 103 form a TNFR-Cys 2; truncated repeat; that stretch reads RCPPHTYTTIPIILMDVINVENAQPDHLIR.

The protein belongs to the poxviridae A53R protein family.

This chain is Truncated secreted TNF-receptor-like protein A53R, found in Vaccinia virus (strain Western Reserve) (VACV).